The primary structure comprises 455 residues: Bifunctional protein GlmU (455 aa).

The interval 1-230 is pyrophosphorylase; sequence MSNRFAVILA…VEETLGVNDR (230 aa). Residues 9-12, lysine 23, glutamine 73, and 78-79 each bind UDP-N-acetyl-alpha-D-glucosamine; these read LAAG and GT. Aspartate 103 is a binding site for Mg(2+). UDP-N-acetyl-alpha-D-glucosamine contacts are provided by glycine 140, glutamate 155, asparagine 170, and asparagine 228. Mg(2+) is bound at residue asparagine 228. Residues 231–251 are linker; the sequence is VALAQAEQVMKRRINEAWMRK. Residues 252–455 are N-acetyltransferase; sequence GVTFIDPEQT…KEHYVTKKNN (204 aa). UDP-N-acetyl-alpha-D-glucosamine is bound by residues arginine 333 and lysine 351. Histidine 363 functions as the Proton acceptor in the catalytic mechanism. UDP-N-acetyl-alpha-D-glucosamine is bound by residues tyrosine 366 and asparagine 377. Acetyl-CoA is bound by residues 386–387, alanine 423, and arginine 440; that span reads NY.

The protein in the N-terminal section; belongs to the N-acetylglucosamine-1-phosphate uridyltransferase family. It in the C-terminal section; belongs to the transferase hexapeptide repeat family. Homotrimer. The cofactor is Mg(2+).

Its subcellular location is the cytoplasm. It carries out the reaction alpha-D-glucosamine 1-phosphate + acetyl-CoA = N-acetyl-alpha-D-glucosamine 1-phosphate + CoA + H(+). It catalyses the reaction N-acetyl-alpha-D-glucosamine 1-phosphate + UTP + H(+) = UDP-N-acetyl-alpha-D-glucosamine + diphosphate. Its pathway is nucleotide-sugar biosynthesis; UDP-N-acetyl-alpha-D-glucosamine biosynthesis; N-acetyl-alpha-D-glucosamine 1-phosphate from alpha-D-glucosamine 6-phosphate (route II): step 2/2. It functions in the pathway nucleotide-sugar biosynthesis; UDP-N-acetyl-alpha-D-glucosamine biosynthesis; UDP-N-acetyl-alpha-D-glucosamine from N-acetyl-alpha-D-glucosamine 1-phosphate: step 1/1. It participates in bacterial outer membrane biogenesis; LPS lipid A biosynthesis. Catalyzes the last two sequential reactions in the de novo biosynthetic pathway for UDP-N-acetylglucosamine (UDP-GlcNAc). The C-terminal domain catalyzes the transfer of acetyl group from acetyl coenzyme A to glucosamine-1-phosphate (GlcN-1-P) to produce N-acetylglucosamine-1-phosphate (GlcNAc-1-P), which is converted into UDP-GlcNAc by the transfer of uridine 5-monophosphate (from uridine 5-triphosphate), a reaction catalyzed by the N-terminal domain. This chain is Bifunctional protein GlmU, found in Halalkalibacterium halodurans (strain ATCC BAA-125 / DSM 18197 / FERM 7344 / JCM 9153 / C-125) (Bacillus halodurans).